We begin with the raw amino-acid sequence, 256 residues long: L-erythrulose-1-phosphate isomerase (256 aa).

The active-site Electrophile is H96. E169 serves as the catalytic Proton acceptor. The substrate site is built by G175 and S212.

The protein belongs to the triosephosphate isomerase family. In terms of assembly, homodimer.

Its subcellular location is the cytoplasm. The enzyme catalyses L-erythrulose 1-phosphate = D-erythrulose 4-phosphate. It participates in carbohydrate metabolism; erythritol degradation. Catalyzes the isomerization of D-erythrulose-4P to L-erythrulose-1P. In Brucella melitensis biotype 1 (strain ATCC 23456 / CCUG 17765 / NCTC 10094 / 16M), this protein is L-erythrulose-1-phosphate isomerase.